The chain runs to 524 residues: CDC50-related protein CDC50.1 (524 aa).

2 stretches are compositionally biased toward polar residues: residues 1–19 (MGEN…SQFS) and 26–39 (TLSS…QQSL). Disordered regions lie at residues 1–40 (MGEN…QSLP) and 52–86 (APSV…DAGS). Topologically, residues 1–181 (MGENSTTGLR…GMYPLWSAGV (181 aa)) are cytoplasmic. Residues 67-80 (GSSRLTSRGTSLSS) are compositionally biased toward low complexity. Residues 182–202 (VLRLCLLGALFFVSVGAWLIF) traverse the membrane as a helical segment. Residues 203-473 (EDEQHVECKL…VQKSRLGGRS (271 aa)) lie on the Extracellular side of the membrane. Residues N297 and N339 are each glycosylated (N-linked (GlcNAc...) asparagine). Residues 474-494 (LFIGIAYLSFGCLLTMLVFYM) traverse the membrane as a helical segment. The Cytoplasmic portion of the chain corresponds to 495–524 (LWKKWQYRREGEEIRDLRWQTKTRGSKKTK).

The protein belongs to the CDC50/LEM3 family. As to quaternary structure, interacts with GC; the interaction regulates guanylate cyclase GC trafficking and sensing environmental changes.

Its subcellular location is the membrane. Functionally, in tachyzoites, required for the cellular trafficking of guanylate cyclase GC and UGO to the cell membrane. May play a role in the folding of the GC P-type ATPase-like domain to sense vacuolar changes in phosphatidic acid and pH levels which trigger parasite egress. This chain is CDC50-related protein CDC50.1, found in Toxoplasma gondii (strain ATCC 50853 / GT1).